The sequence spans 460 residues: Serine--tRNA ligase (460 aa).

Residues 43 to 66 show a composition bias toward basic and acidic residues; it reads AEGDGLRQERNEVSSKIGELKQDG. The segment at 43–81 is disordered; sequence AEGDGLRQERNEVSSKIGELKQDGKDEEAQEAIDRSQEL. Residue 242–244 participates in L-serine binding; sequence TAE. Residues 273 to 275 and valine 289 each bind ATP; that span reads RRE. Glutamate 296 is a binding site for L-serine. An ATP-binding site is contributed by 369 to 372; that stretch reads EVSS. Serine 405 contacts L-serine.

This sequence belongs to the class-II aminoacyl-tRNA synthetase family. Type-1 seryl-tRNA synthetase subfamily. As to quaternary structure, homodimer. The tRNA molecule binds across the dimer.

It is found in the cytoplasm. The catalysed reaction is tRNA(Ser) + L-serine + ATP = L-seryl-tRNA(Ser) + AMP + diphosphate + H(+). It catalyses the reaction tRNA(Sec) + L-serine + ATP = L-seryl-tRNA(Sec) + AMP + diphosphate + H(+). The protein operates within aminoacyl-tRNA biosynthesis; selenocysteinyl-tRNA(Sec) biosynthesis; L-seryl-tRNA(Sec) from L-serine and tRNA(Sec): step 1/1. Its function is as follows. Catalyzes the attachment of serine to tRNA(Ser). Is also probably able to aminoacylate tRNA(Sec) with serine, to form the misacylated tRNA L-seryl-tRNA(Sec), which will be further converted into selenocysteinyl-tRNA(Sec). This Haloarcula marismortui (strain ATCC 43049 / DSM 3752 / JCM 8966 / VKM B-1809) (Halobacterium marismortui) protein is Serine--tRNA ligase (serS).